A 397-amino-acid chain; its full sequence is Ribosomal RNA processing protein 1 homolog (397 aa).

A compositionally biased stretch (basic and acidic residues) spans 334–343 (EAAEAARQEN). Residues 334–366 (EAAEAARQENGDDVPDDEIAEVKKGNGKKTAVP) form a disordered region.

This sequence belongs to the RRP1 family.

The protein localises to the nucleus. In terms of biological role, may be involved in the generation of 28S rRNA. The sequence is that of Ribosomal RNA processing protein 1 homolog from Caenorhabditis elegans.